The sequence spans 63 residues: Crotasin (63 aa).

The N-terminal stretch at 1-22 (MKILYLLSAFLFLAFLSESGNA) is a signal peptide. Intrachain disulfides connect C26–C56, C33–C50, and C38–C57.

In terms of tissue distribution, highly expressed in pancreas, heart, liver, brain and kidney. Expressed to a low extent in the venom gland.

The protein localises to the secreted. The chain is Crotasin from Crotalus durissus terrificus (South American rattlesnake).